The sequence spans 290 residues: MPRFTKTKGTLAATALGLALAGAAFADPVEDGLVIETDSGPVEIVTKTAPPAFLADTFDTIYSGWHFRDDSTRDLERDDFDNPAMVFVDRGLDKWNAAMGVNGESCASCHQGPESMAGLRAVMPRVDEHTGKLMIMEDYVNACVTERMGLEKWGVTSDNMKDMLSLISLQSRGMAVNVKIDGPAAPYWEHGKEIYYTRYGQLEMSCANCHEDNAGNMIRADHLSQGQINGFPTYRLKDSGMVTAQHRFVGCVRDTRAETFKAGSDDFKALELYVASRGNGLSVEGVSVRH.

A signal peptide spans 1–26 (MPRFTKTKGTLAATALGLALAGAAFA). Asp78 and Asp81 together coordinate Zn(2+). Residues 78 to 171 (DDFDNPAMVF…DMLSLISLQS (94 aa)) enclose the Cytochrome c domain. Heme c-binding residues include Cys106, Cys109, His110, and Cys143. Residue His190 coordinates Zn(2+). Positions 206, 209, and 210 each coordinate heme c. Substrate is bound at residue Arg247. Cys251 is a binding site for heme c. Cys251 serves as the catalytic Cysteine persulfide intermediate. Asp266 contacts Zn(2+).

Belongs to the SoxA family. In terms of assembly, heterodimer of SoxA and SoxX. It depends on heme c as a cofactor. Zn(2+) is required as a cofactor. Cysteine persulfide at Cys-251.

The protein localises to the periplasm. It carries out the reaction L-cysteinyl-[SoxY protein] + thiosulfate + 2 Fe(III)-[cytochrome c] = S-sulfosulfanyl-L-cysteinyl-[SoxY protein] + 2 Fe(II)-[cytochrome c] + 2 H(+). It catalyses the reaction S-sulfanyl-L-cysteinyl-[SoxY protein] + thiosulfate + 2 Fe(III)-[cytochrome c] = S-(2-sulfodisulfanyl)-L-cysteinyl-[SoxY protein] + 2 Fe(II)-[cytochrome c] + 2 H(+). Its function is as follows. C-type diheme cytochrome, which is part of the SoxAX cytochrome complex involved in sulfur oxidation. The SoxAX complex catalyzes the formation of a heterodisulfide bond between the conserved cysteine residue on a sulfur carrier SoxYZ complex subunit SoxY and thiosulfate or other inorganic sulfur substrates. This leads to the liberation of two electrons, which may be transferred from the SoxAX complex to another cytochrome c that then channels them into the respiratory electron transport chain. Some electrons may be used for reductive CO(2) fixation. This Paracoccus pantotrophus (Thiosphaera pantotropha) protein is L-cysteine S-thiosulfotransferase subunit SoxA.